The primary structure comprises 235 residues: Octanoyltransferase (235 aa).

Residues aspartate 44 to asparagine 231 enclose the BPL/LPL catalytic domain. Substrate contacts are provided by residues arginine 83–histidine 90, serine 150–glycine 152, and glycine 163–alanine 165. Cysteine 181 acts as the Acyl-thioester intermediate in catalysis.

Belongs to the LipB family.

The protein resides in the cytoplasm. It catalyses the reaction octanoyl-[ACP] + L-lysyl-[protein] = N(6)-octanoyl-L-lysyl-[protein] + holo-[ACP] + H(+). The protein operates within protein modification; protein lipoylation via endogenous pathway; protein N(6)-(lipoyl)lysine from octanoyl-[acyl-carrier-protein]: step 1/2. Its function is as follows. Catalyzes the transfer of endogenously produced octanoic acid from octanoyl-acyl-carrier-protein onto the lipoyl domains of lipoate-dependent enzymes. Lipoyl-ACP can also act as a substrate although octanoyl-ACP is likely to be the physiological substrate. The chain is Octanoyltransferase from Colwellia psychrerythraea (strain 34H / ATCC BAA-681) (Vibrio psychroerythus).